A 384-amino-acid chain; its full sequence is 23S rRNA (uracil(747)-C(5))-methyltransferase RlmC (384 aa).

[4Fe-4S] cluster is bound by residues Cys-7, Cys-15, Cys-18, and Cys-94. 4 residues coordinate S-adenosyl-L-methionine: Gln-219, Phe-248, Glu-269, and Asn-316. Cys-343 serves as the catalytic Nucleophile.

The protein belongs to the class I-like SAM-binding methyltransferase superfamily. RNA M5U methyltransferase family. RlmC subfamily.

The catalysed reaction is uridine(747) in 23S rRNA + S-adenosyl-L-methionine = 5-methyluridine(747) in 23S rRNA + S-adenosyl-L-homocysteine + H(+). Functionally, catalyzes the formation of 5-methyl-uridine at position 747 (m5U747) in 23S rRNA. The chain is 23S rRNA (uracil(747)-C(5))-methyltransferase RlmC from Shewanella sp. (strain MR-4).